The following is a 502-amino-acid chain: Solute carrier family 2, facilitated glucose transporter member 5 (502 aa).

Residue Met1 is modified to N-acetylmethionine. The Cytoplasmic segment spans residues 1–17; sequence MEKEDQEKTGKLTLVLA. The helical transmembrane segment at 18–38 threads the bilayer; that stretch reads LATFLAAFGSSFQYGYNVAAV. Tyr31 serves as a coordination point for D-fructose. The Extracellular portion of the chain corresponds to 39 to 67; it reads NSPSEFMQQFYNDTYYDRNKENIESFTLT. N-linked (GlcNAc...) asparagine glycosylation is present at Asn50. A helical membrane pass occupies residues 68–90; that stretch reads LLWSLTVSMFPFGGFIGSLMVGF. Topologically, residues 91 to 97 are cytoplasmic; sequence LVNNLGR. A helical membrane pass occupies residues 98–118; sequence KGALLFNNIFSILPAILMGCS. Over 119–125 the chain is Extracellular; sequence KIAKSFE. The helical transmembrane segment at 126-148 threads the bilayer; it reads IIIASRLLVGICAGISSNVVPMY. Residues 149 to 160 are Cytoplasmic-facing; it reads LGELAPKNLRGA. The helical transmembrane segment at 161–181 threads the bilayer; it reads LGVVPQLFITVGILVAQLFGL. Residue Gln166 participates in D-fructose binding. At 182 to 191 the chain is on the extracellular side; sequence RSVLASEEGW. Residues 192 to 212 form a helical membrane-spanning segment; it reads PILLGLTGVPAGLQLLLLPFF. Topologically, residues 213–276 are cytoplasmic; that stretch reads PESPRYLLIQ…LFRMQSLRWQ (64 aa). Residues 277 to 297 form a helical membrane-spanning segment; it reads LISTIVLMAGQQLSGVNAIYY. D-fructose contacts are provided by residues Gln287 and 295–297; that span reads IYY. Residues 298–312 are Extracellular-facing; sequence YADQIYLSAGVKSND. The chain crosses the membrane as a helical span at residues 313 to 333; sequence VQYVTAGTGAVNVFMTMVTVF. Over 334–341 the chain is Cytoplasmic; sequence VVELWGRR. The helical transmembrane segment at 342–362 threads the bilayer; sequence NLLLIGFSTCLTACIVLTVAL. The Extracellular segment spans residues 363–370; sequence ALQNTISW. Residues 371-393 traverse the membrane as a helical segment; the sequence is MPYVSIVCVIVYVIGHAVGPSPI. Residue His386 participates in D-fructose binding. Over 394–411 the chain is Cytoplasmic; the sequence is PALFITEIFLQSSRPSAY. A helical transmembrane segment spans residues 412-432; that stretch reads MIGGSVHWLSNFIVGLIFPFI. Residue 418 to 419 coordinates D-fructose; sequence HW. The Extracellular segment spans residues 433–438; sequence QVGLGP. The chain crosses the membrane as a helical span at residues 439 to 459; that stretch reads YSFIIFAIICLLTTIYIFMVV. The Cytoplasmic segment spans residues 460-502; sequence PETKGRTFVEINQIFAKKNKVSDVYPEKEEKELNDLPPATREQ.

It belongs to the major facilitator superfamily. Sugar transporter (TC 2.A.1.1) family. Glucose transporter subfamily. As to expression, detected in jejunum. Detected in kidney, skeletal muscle, brain and adipose tissue (at protein level). Detected in small intestine and in kidney, and at much lower levels in brain. Detected in enterocytes in duodenum, jejunum, and ileum.

The protein resides in the apical cell membrane. It is found in the cell membrane. It localises to the sarcolemma. The enzyme catalyses D-fructose(out) = D-fructose(in). Fructose uptake is inhibited by mercury ions. Fructose uptake is only slightly inhibited by cytochalasin B. Its function is as follows. Functions as a fructose transporter that has only low activity with other monosaccharides. Can mediate the uptake of deoxyglucose, but with low efficiency. Essential for fructose uptake in the small intestine. Plays a role in the regulation of salt uptake and blood pressure in response to dietary fructose. Required for the development of high blood pressure in response to high dietary fructose intake. The chain is Solute carrier family 2, facilitated glucose transporter member 5 from Rattus norvegicus (Rat).